The following is a 332-amino-acid chain: Glycerol-3-phosphate dehydrogenase [NAD(P)+] (332 aa).

NADPH is bound by residues W13, K34, and K108. Sn-glycerol 3-phosphate-binding residues include K108, G136, and S138. Residue A140 coordinates NADPH. Positions 191, 244, 254, 255, and 256 each coordinate sn-glycerol 3-phosphate. The Proton acceptor role is filled by K191. R255 serves as a coordination point for NADPH. Residues V279 and E281 each coordinate NADPH.

It belongs to the NAD-dependent glycerol-3-phosphate dehydrogenase family.

It is found in the cytoplasm. It carries out the reaction sn-glycerol 3-phosphate + NAD(+) = dihydroxyacetone phosphate + NADH + H(+). It catalyses the reaction sn-glycerol 3-phosphate + NADP(+) = dihydroxyacetone phosphate + NADPH + H(+). Its pathway is membrane lipid metabolism; glycerophospholipid metabolism. In terms of biological role, catalyzes the reduction of the glycolytic intermediate dihydroxyacetone phosphate (DHAP) to sn-glycerol 3-phosphate (G3P), the key precursor for phospholipid synthesis. In Francisella philomiragia subsp. philomiragia (strain ATCC 25017 / CCUG 19701 / FSC 153 / O#319-036), this protein is Glycerol-3-phosphate dehydrogenase [NAD(P)+].